Here is a 620-residue protein sequence, read N- to C-terminus: Zinc metalloproteinase-disintegrin-like ACLD (620 aa).

The signal sequence occupies residues 1–20; the sequence is MIQVLLVTLCLAVFPYQGSS. Residues 21-189 constitute a propeptide that is removed on maturation; sequence IILESGNVND…KKASQLNLTP (169 aa). The Peptidase M12B domain occupies 199–395; it reads KYVEFVVVLD…RRPKCILNEP (197 aa). Ca(2+) is bound at residue E202. N-linked (GlcNAc...) asparagine glycosylation is found at N259 and N265. D286 lines the Ca(2+) pocket. 3 cysteine pairs are disulfide-bonded: C310-C390, C350-C374, and C352-C357. Residue H335 coordinates Zn(2+). E336 is an active-site residue. H339 and H345 together coordinate Zn(2+). N-linked (GlcNAc...) asparagine glycosylation occurs at N373. Positions 390 and 393 each coordinate Ca(2+). A glycan (N-linked (GlcNAc...) asparagine) is linked at N396. Positions 403–489 constitute a Disintegrin domain; the sequence is PPVCGNELLE…ECPTDRFQRN (87 aa). Ca(2+) contacts are provided by V405, N408, L410, E412, E415, and D418. Disulfide bonds link C406-C435, C417-C430, C419-C425, C429-C452, C443-C449, C448-C474, C461-C481, C468-C500, C493-C505, C512-C562, C527-C573, C540-C550, C557-C599, and C593-C604. The short motif at 467 to 469 is the D/ECD-tripeptide element; sequence DCD. N502 and N536 each carry an N-linked (GlcNAc...) asparagine glycan.

Belongs to the venom metalloproteinase (M12B) family. P-III subfamily. P-IIIa sub-subfamily. In terms of assembly, monomer. The cofactor is Zn(2+). As to expression, expressed by the venom gland.

It is found in the secreted. Inhibited by EDTA and O-phenanthroline. Not inhibited by PMSF, benzamidine, irreversible serine-proteinase inhibitors and cysteine proteinase inhibitor E-64. Functionally, is a potent activator of prothrombin (F2). Does not elicit any hemorrhagic response. Barely inhibits collagen-induced platelet aggregation. Binds neither collagen, nor the jararhagin-monoclonal antibody MAJar3. Hydrolyzes the Aalpha-chain of fibrin and fibrinogen, without affecting the Bbeta- and gamma-chains. Is capable of triggering endothelial pro-inflammatory and procoagulant cell responses, but fails to trigger apoptosis. Induces von Willebrand factor release, and the expression of both ICAM1 and E-selectin (SELE) (without increase in VCAM1) in endothelial cells (HUVEC). Is also able to up-regulate the synthesis of the coagulation factor TF (F3). Enhances nitric oxide (NO) generation, prostacyclin production and interleukin-8 release. The chain is Zinc metalloproteinase-disintegrin-like ACLD from Agkistrodon contortrix laticinctus (Broad-banded copperhead).